A 179-amino-acid polypeptide reads, in one-letter code: uncharacterized protein (179 aa).

Residues 1-26 (MKKNMILFFGILKKLLICILKMEIKC) form the signal peptide.

This is an uncharacterized protein from Acheta domesticus (House cricket).